The following is an 81-amino-acid chain: Photosystem I iron-sulfur center (81 aa).

2 4Fe-4S ferredoxin-type domains span residues 2–31 (AHSV…MVPR) and 39–68 (IASA…VRVY). C11, C14, C17, C21, C48, C51, C54, and C58 together coordinate [4Fe-4S] cluster.

In terms of assembly, the eukaryotic PSI reaction center is composed of at least 11 subunits. The cofactor is [4Fe-4S] cluster.

Its subcellular location is the plastid. It is found in the chloroplast thylakoid membrane. It carries out the reaction reduced [plastocyanin] + hnu + oxidized [2Fe-2S]-[ferredoxin] = oxidized [plastocyanin] + reduced [2Fe-2S]-[ferredoxin]. In terms of biological role, apoprotein for the two 4Fe-4S centers FA and FB of photosystem I (PSI); essential for photochemical activity. FB is the terminal electron acceptor of PSI, donating electrons to ferredoxin. The C-terminus interacts with PsaA/B/D and helps assemble the protein into the PSI complex. Required for binding of PsaD and PsaE to PSI. PSI is a plastocyanin/cytochrome c6-ferredoxin oxidoreductase, converting photonic excitation into a charge separation, which transfers an electron from the donor P700 chlorophyll pair to the spectroscopically characterized acceptors A0, A1, FX, FA and FB in turn. This chain is Photosystem I iron-sulfur center, found in Antithamnion sp. (Red alga).